The following is a 226-amino-acid chain: MYSISFQEDSLLPRERLAKEGVEALSNQELLAILLRTGTRQASVFEIAQKVLNNLSSLTDLKKMTLQELQSLSGIGRVKAIELQAMIELGHRIHKHETLEMESILSSQKLAKKMQQELGDKKQEHLVALYLNTQNQIIHQQTIFIGSVTRSIAEPREILHYAIKHMATSLILVHNHPSGAVAPSQNDDHVTKLVKEACELMGIVLLDHLIVSHSNYFSYREKTDLI.

The 123-residue stretch at 103–225 (SILSSQKLAK…YFSYREKTDL (123 aa)) folds into the MPN domain. The Zn(2+) site is built by His-174, His-176, and Asp-187. The short motif at 174 to 187 (HNHPSGAVAPSQND) is the JAMM motif element.

This sequence belongs to the UPF0758 family.

The protein is UPF0758 protein SPT_1135 of Streptococcus pneumoniae (strain Taiwan19F-14).